A 476-amino-acid polypeptide reads, in one-letter code: Serine/threonine-protein kinase PBL36 (476 aa).

The Protein kinase domain occupies 126 to 412; that stretch reads FRPESLLGEG…VEALKPLPNL (287 aa). Residues 132–140 and K164 contribute to the ATP site; that span reads LGEGGFGCV. At Y209 the chain carries Phosphotyrosine. Residue D259 is the Proton acceptor of the active site. 2 positions are modified to phosphoserine: S263 and S293. Residues T294 and T299 each carry the phosphothreonine modification. Phosphotyrosine is present on Y307. The interval 431 to 476 is disordered; the sequence is NGVRTQGGGFVSRNGPPMRSLSSLNLPQASPYRYARQSPKPKGKEP.

It belongs to the protein kinase superfamily. Ser/Thr protein kinase family. Interacts with SD129. Post-translationally, phosphorylated by SD129 in response to the pathogen-associated molecular pattern (PAMP) 3-OH-C10:0, a medium-chain 3-hydroxy fatty acid.

It localises to the cell membrane. The catalysed reaction is L-seryl-[protein] + ATP = O-phospho-L-seryl-[protein] + ADP + H(+). It carries out the reaction L-threonyl-[protein] + ATP = O-phospho-L-threonyl-[protein] + ADP + H(+). Functionally, involved in chitin-triggered immune signaling and is required for reactive oxygen species (ROS) production. Acts downstream of SD129 in defense signaling triggered by the pathogen-associated molecular pattern (PAMP) 3-OH-C10:0, a medium-chain 3-hydroxy fatty acid. This chain is Serine/threonine-protein kinase PBL36, found in Arabidopsis thaliana (Mouse-ear cress).